A 1077-amino-acid polypeptide reads, in one-letter code: Carbamoyl phosphate synthase large chain (1077 aa).

A carboxyphosphate synthetic domain region spans residues 1–403 (MPKRTDIQSI…SLHKALRGLE (403 aa)). ATP is bound by residues arginine 129, arginine 169, glycine 175, glycine 176, glutamate 208, leucine 210, glutamate 215, glycine 241, isoleucine 242, histidine 243, glutamine 285, and glutamate 299. Positions 133–328 (DKAMKSIGLE…IAKIAAKLAV (196 aa)) constitute an ATP-grasp 1 domain. Positions 285, 299, and 301 each coordinate Mg(2+). The Mn(2+) site is built by glutamine 285, glutamate 299, and asparagine 301. Residues 404–553 (VGATGFDEMV…YSSYDEECEA (150 aa)) are oligomerization domain. The carbamoyl phosphate synthetic domain stretch occupies residues 554-935 (NPTDKDKIMV…AYAKAELGCG (382 aa)). The 192-residue stretch at 678–869 (QAAVERLGLL…LAKIAARVMA (192 aa)) folds into the ATP-grasp 2 domain. Residues arginine 714, arginine 753, leucine 755, glutamate 760, glycine 785, valine 786, histidine 787, serine 788, glutamine 828, and glutamate 840 each contribute to the ATP site. The Mg(2+) site is built by glutamine 828, glutamate 840, and asparagine 842. Mn(2+) contacts are provided by glutamine 828, glutamate 840, and asparagine 842. The region spanning 936–1077 (SVYPEGGRAL…HAKVKASLEA (142 aa)) is the MGS-like domain. Positions 936–1077 (SVYPEGGRAL…HAKVKASLEA (142 aa)) are allosteric domain.

The protein belongs to the CarB family. Composed of two chains; the small (or glutamine) chain promotes the hydrolysis of glutamine to ammonia, which is used by the large (or ammonia) chain to synthesize carbamoyl phosphate. Tetramer of heterodimers (alpha,beta)4. It depends on Mg(2+) as a cofactor. The cofactor is Mn(2+).

It catalyses the reaction hydrogencarbonate + L-glutamine + 2 ATP + H2O = carbamoyl phosphate + L-glutamate + 2 ADP + phosphate + 2 H(+). It carries out the reaction hydrogencarbonate + NH4(+) + 2 ATP = carbamoyl phosphate + 2 ADP + phosphate + 2 H(+). The protein operates within amino-acid biosynthesis; L-arginine biosynthesis; carbamoyl phosphate from bicarbonate: step 1/1. Its pathway is pyrimidine metabolism; UMP biosynthesis via de novo pathway; (S)-dihydroorotate from bicarbonate: step 1/3. In terms of biological role, large subunit of the glutamine-dependent carbamoyl phosphate synthetase (CPSase). CPSase catalyzes the formation of carbamoyl phosphate from the ammonia moiety of glutamine, carbonate, and phosphate donated by ATP, constituting the first step of 2 biosynthetic pathways, one leading to arginine and/or urea and the other to pyrimidine nucleotides. The large subunit (synthetase) binds the substrates ammonia (free or transferred from glutamine from the small subunit), hydrogencarbonate and ATP and carries out an ATP-coupled ligase reaction, activating hydrogencarbonate by forming carboxy phosphate which reacts with ammonia to form carbamoyl phosphate. The sequence is that of Carbamoyl phosphate synthase large chain from Vibrio parahaemolyticus serotype O3:K6 (strain RIMD 2210633).